A 430-amino-acid chain; its full sequence is UDP-N-acetylglucosamine 1-carboxyvinyltransferase 1 (430 aa).

Phosphoenolpyruvate is bound at residue 22–23 (KN). Arg-93 is a UDP-N-acetyl-alpha-D-glucosamine binding site. The Proton donor role is filled by Cys-117. Cys-117 is subject to 2-(S-cysteinyl)pyruvic acid O-phosphothioketal. UDP-N-acetyl-alpha-D-glucosamine is bound by residues 122-126 (RPVDL), Asp-305, and Val-327.

It belongs to the EPSP synthase family. MurA subfamily.

Its subcellular location is the cytoplasm. The enzyme catalyses phosphoenolpyruvate + UDP-N-acetyl-alpha-D-glucosamine = UDP-N-acetyl-3-O-(1-carboxyvinyl)-alpha-D-glucosamine + phosphate. Its pathway is cell wall biogenesis; peptidoglycan biosynthesis. Cell wall formation. Adds enolpyruvyl to UDP-N-acetylglucosamine. The sequence is that of UDP-N-acetylglucosamine 1-carboxyvinyltransferase 1 from Listeria monocytogenes serotype 4b (strain F2365).